A 926-amino-acid polypeptide reads, in one-letter code: Progesterone receptor (926 aa).

Residues methionine 1–valine 48 form a disordered region. The AF3; mediates transcriptional activation (in isoform B) stretch occupies residues methionine 1–leucine 165. The interval methionine 1–isoleucine 559 is modulating, Pro-Rich. Lysine 7 participates in a covalent cross-link: Glycyl lysine isopeptide (Lys-Gly) (interchain with G-Cter in SUMO). A Phosphoserine modification is found at serine 20. An LXXL motif 1 motif is present at residues leucine 56–leucine 60. At serine 82 the chain carries Phosphoserine. The LXXL motif 1 motif lies at leucine 116 to leucine 120. 2 positions are modified to phosphoserine: serine 131 and serine 163. The interval methionine 166 to histidine 305 is mediates transcriptional transrepression (in isoform A). Residues arginine 168 to alanine 256 form a disordered region. The short motif at lysine 184–lysine 188 is the Nuclear localization signal element. Residues serine 191 and serine 214 each carry the phosphoserine modification. Serine 294 carries the phosphoserine; by MAPK1 modification. The tract at residues aspartate 327–proline 364 is disordered. A compositionally biased stretch (pro residues) spans phenylalanine 339–proline 354. A Phosphoserine; by MAPK modification is found at serine 345. Residue lysine 388 forms a Glycyl lysine isopeptide (Lys-Gly) (interchain with G-Cter in SUMO); alternate linkage. Residue lysine 388 forms a Glycyl lysine isopeptide (Lys-Gly) (interchain with G-Cter in ubiquitin); alternate linkage. Residues glutamate 391–proline 447 are disordered. Position 400 is a phosphoserine; by CDK2 (serine 400). The span at alanine 422–proline 447 shows a compositional bias: low complexity. The segment at serine 453–arginine 539 is AF1; mediates transcriptional activation. A Glycyl lysine isopeptide (Lys-Gly) (interchain with G-Cter in SUMO) cross-link involves residue lysine 524. A DNA-binding region (nuclear receptor) is located at residues glutamine 557–phenylalanine 632. NR C4-type zinc fingers lie at residues cysteine 560–cysteine 580 and cysteine 596–cysteine 615. Serine 669 carries the post-translational modification Phosphoserine. The region spanning glutamine 672 to isoleucine 906 is the NR LBD domain. The tract at residues glutamate 673–lysine 926 is AF2; mediates transcriptional activation. Residue arginine 759 participates in progesterone binding.

The protein belongs to the nuclear hormone receptor family. NR3 subfamily. Interacts with SMARD1 and UNC45A. Interacts with CUEDC2; the interaction promotes ubiquitination, decreases sumoylation, and represses transcriptional activity. Interacts with PIAS3; the interaction promotes sumoylation of PR in a hormone-dependent manner, inhibits DNA-binding, and alters nuclear export. Interacts with SP1; the interaction requires ligand-induced phosphorylation on Ser-294 by ERK1/2 MAPK. Interacts with PRMT2. Isoform A interacts with NCOR2. Isoform B (but not isoform A) interacts with NCOA2 and NCOA1. Isoform B (but not isoform A) interacts with KLF9. In terms of processing, phosphorylated on multiple serine sites. Several of these sites are hormone-dependent. Phosphorylation on Ser-294 is highly hormone-dependent and modulates ubiquitination and sumoylation on Lys-388. Phosphorylation on Ser-345 also requires induction by hormone. Basal phosphorylation on Ser-82, Ser-163, Ser-191 and Ser-400 is increased in response to progesterone and can be phosphorylated in vitro by the CDK2-A1 complex. Increased levels of phosphorylation on Ser-400 also in the presence of EGF, heregulin, IGF, PMA and FBS. Phosphorylation at this site by CDK2 is ligand-independent, and increases nuclear translocation and transcriptional activity. Phosphorylation at Ser-163 and Ser-294, but not at Ser-191, is impaired during the G(2)/M phase of the cell cycle. Phosphorylation on Ser-345 by ERK1/2 MAPK is required for interaction with SP1. Sumoylation is hormone-dependent and represses transcriptional activity. Sumoylation on all three sites is enhanced by PIAS3. Desumoylated by SENP1. Sumoylation on Lys-388, the main site of sumoylation, is repressed by ubiquitination on the same site, and modulated by phosphorylation at Ser-294. Post-translationally, ubiquitination is hormone-dependent and represses sumoylation on the same site. Promoted by MAPK-mediated phosphorylation on Ser-294. Ubiquitinated by UBR5, leading to its degradation: UBR5 specifically recognizes and binds ligand-bound PGR when it is not associated with coactivators (NCOAs). In presence of NCOAs, the UBR5-degron is not accessible, preventing its ubiquitination and degradation. In terms of processing, palmitoylated by ZDHHC7 and ZDHHC21. Palmitoylation is required for plasma membrane targeting and for rapid intracellular signaling via ERK and AKT kinases and cAMP generation. As to expression, expression of isoform A and isoform B in mammary epithelial cells is temporally and spatially separated during normal mammary gland development. Isoform A and isoform B are expressed in the pituitary. Isoform A and isoform B are differentially expressed in the ovary and oviduct, and the level of expression is dependent on both the cell type and estrous cycle stage.

It is found in the nucleus. The protein resides in the cytoplasm. In terms of biological role, the steroid hormones and their receptors are involved in the regulation of eukaryotic gene expression and affect cellular proliferation and differentiation in target tissues. Depending on the isoform, progesterone receptor functions as a transcriptional activator or repressor. Its function is as follows. Ligand-dependent transdominant repressor of steroid hormone receptor transcriptional activity including repression of its isoform B, MR and ER. Transrepressional activity may involve recruitment of corepressor NCOR2. Transcriptional activator of several progesteron-dependent promoters in a variety of cell types. Involved in activation of SRC-dependent MAPK signaling on hormone stimulation. This Mus musculus (Mouse) protein is Progesterone receptor (Pgr).